The following is a 603-amino-acid chain: NADH-ubiquinone oxidoreductase chain 5 (603 aa).

16 helical membrane passes run 4-24 (FTTMTALTLTSLIPPITATLI), 38-58 (TAIASAFTISLIPTTMFICLG), 89-109 (FLPVALLITWSIMEFSLWYMA), 122-142 (LIFLITMIILVTANNLLQLFI), 171-191 (AILYNRIGDIGFILALAWFLL), 211-233 (LPLLGLLLAAAGKSAQLGLHPWL), 241-261 (TPVSALLHSSTMVVAGVFLLI), 273-293 (IQTLTLCLGAITTLFAAICAL), 301-320 (IVAFSTSSQLGLMMVTIGIN), 325-347 (ALLHICTHAFFKALLFMCSGSII), 366-386 (MPLTSTSLTISSLALAGMPFL), 405-424 (NTWALSITLIATSLTGAYST), 457-477 (LMLGSLFAGFLITNNIPPMSL), 488-508 (LAALAATLLGLLVALDLNYLA), 524-544 (IMLGFYPSIIHRMIPHLSLLM), and 582-602 (GLIKLYFLSFLIPLLLILLMI).

It belongs to the complex I subunit 5 family. Core subunit of respiratory chain NADH dehydrogenase (Complex I) which is composed of 45 different subunits.

Its subcellular location is the mitochondrion inner membrane. The catalysed reaction is a ubiquinone + NADH + 5 H(+)(in) = a ubiquinol + NAD(+) + 4 H(+)(out). In terms of biological role, core subunit of the mitochondrial membrane respiratory chain NADH dehydrogenase (Complex I) which catalyzes electron transfer from NADH through the respiratory chain, using ubiquinone as an electron acceptor. Essential for the catalytic activity and assembly of complex I. The polypeptide is NADH-ubiquinone oxidoreductase chain 5 (MT-ND5) (Pongo abelii (Sumatran orangutan)).